A 387-amino-acid chain; its full sequence is 1-deoxy-D-xylulose 5-phosphate reductoisomerase (387 aa).

Residues T10, G11, S12, I13, G36, N38, and N122 each contribute to the NADPH site. K123 is a 1-deoxy-D-xylulose 5-phosphate binding site. E124 lines the NADPH pocket. Residue D148 coordinates Mn(2+). Positions 149, 150, 174, and 197 each coordinate 1-deoxy-D-xylulose 5-phosphate. E150 is a binding site for Mn(2+). G203 is a binding site for NADPH. S210, N215, K216, and E219 together coordinate 1-deoxy-D-xylulose 5-phosphate. E219 is a Mn(2+) binding site.

Belongs to the DXR family. Mg(2+) serves as cofactor. The cofactor is Mn(2+).

It carries out the reaction 2-C-methyl-D-erythritol 4-phosphate + NADP(+) = 1-deoxy-D-xylulose 5-phosphate + NADPH + H(+). It participates in isoprenoid biosynthesis; isopentenyl diphosphate biosynthesis via DXP pathway; isopentenyl diphosphate from 1-deoxy-D-xylulose 5-phosphate: step 1/6. Catalyzes the NADPH-dependent rearrangement and reduction of 1-deoxy-D-xylulose-5-phosphate (DXP) to 2-C-methyl-D-erythritol 4-phosphate (MEP). The protein is 1-deoxy-D-xylulose 5-phosphate reductoisomerase of Chloroherpeton thalassium (strain ATCC 35110 / GB-78).